The chain runs to 190 residues: Putative phosphatidylethanolamine-binding protein (190 aa).

The protein belongs to the phosphatidylethanolamine-binding protein family.

The chain is Putative phosphatidylethanolamine-binding protein from Plasmodium falciparum.